Reading from the N-terminus, the 193-residue chain is MSTSLLFSLSPSSSSSMRLRASNSFPILNFFLDLDATPSLSSSSASFSELSAPLSIVSRPFCTRDDPLPSDLMNPLLKSPFSLTKFPAANGPLEITCVLFKYLAIRLCWPPAPVTLLFLLLKCFLSLPLLDSSSSFTLDAAASLSSLDFLATAFGLNFNEGLADPPPLEEESFNDGKRPFPLLLLILNECYPA.

An N-terminal signal peptide occupies residues Met-1–Ser-14.

This is an uncharacterized protein from Saccharomyces cerevisiae (strain ATCC 204508 / S288c) (Baker's yeast).